The primary structure comprises 345 residues: Probable dual-specificity RNA methyltransferase RlmN (345 aa).

Glutamate 93 serves as the catalytic Proton acceptor. One can recognise a Radical SAM core domain in the interval aspartate 99 to aspartate 326. A disulfide bridge links cysteine 106 with cysteine 331. [4Fe-4S] cluster contacts are provided by cysteine 113, cysteine 117, and cysteine 120. Residues glycine 158 to glutamate 159, serine 190, serine 212 to histidine 214, and histidine 288 contribute to the S-adenosyl-L-methionine site. Cysteine 331 serves as the catalytic S-methylcysteine intermediate.

It belongs to the radical SAM superfamily. RlmN family. Requires [4Fe-4S] cluster as cofactor.

It is found in the cytoplasm. The enzyme catalyses adenosine(2503) in 23S rRNA + 2 reduced [2Fe-2S]-[ferredoxin] + 2 S-adenosyl-L-methionine = 2-methyladenosine(2503) in 23S rRNA + 5'-deoxyadenosine + L-methionine + 2 oxidized [2Fe-2S]-[ferredoxin] + S-adenosyl-L-homocysteine. It carries out the reaction adenosine(37) in tRNA + 2 reduced [2Fe-2S]-[ferredoxin] + 2 S-adenosyl-L-methionine = 2-methyladenosine(37) in tRNA + 5'-deoxyadenosine + L-methionine + 2 oxidized [2Fe-2S]-[ferredoxin] + S-adenosyl-L-homocysteine. Specifically methylates position 2 of adenine 2503 in 23S rRNA and position 2 of adenine 37 in tRNAs. The sequence is that of Probable dual-specificity RNA methyltransferase RlmN from Bacteroides thetaiotaomicron (strain ATCC 29148 / DSM 2079 / JCM 5827 / CCUG 10774 / NCTC 10582 / VPI-5482 / E50).